The chain runs to 288 residues: N-acetyltransferase ECO1 (288 aa).

The interval Met-1–Thr-50 is disordered. The span at Gln-7–Ser-18 shows a compositional bias: low complexity. The segment covering Thr-27–Thr-50 has biased composition (polar residues). The segment at Thr-50 to His-74 adopts a CCHH-type zinc-finger fold.

The protein belongs to the acetyltransferase family. ECO subfamily.

The protein resides in the nucleus. Its function is as follows. Probable acetyltransferase required for the establishment of sister chromatid cohesion and couple the processes of cohesion and DNA replication to ensure that only sister chromatids become paired together. In contrast to the structural cohesins, the deposition and establishment factors are required only during S phase. Acts by acetylating the cohesin complex component SMC3. The polypeptide is N-acetyltransferase ECO1 (ECO1) (Debaryomyces hansenii (strain ATCC 36239 / CBS 767 / BCRC 21394 / JCM 1990 / NBRC 0083 / IGC 2968) (Yeast)).